The following is a 309-amino-acid chain: Aspartate carbamoyltransferase catalytic subunit (309 aa).

Residues arginine 58 and threonine 59 each contribute to the carbamoyl phosphate site. Lysine 86 is a binding site for L-aspartate. 3 residues coordinate carbamoyl phosphate: arginine 108, histidine 136, and glutamine 139. 2 residues coordinate L-aspartate: arginine 169 and arginine 223. Positions 264 and 265 each coordinate carbamoyl phosphate.

Belongs to the aspartate/ornithine carbamoyltransferase superfamily. ATCase family. In terms of assembly, heterododecamer (2C3:3R2) of six catalytic PyrB chains organized as two trimers (C3), and six regulatory PyrI chains organized as three dimers (R2).

The enzyme catalyses carbamoyl phosphate + L-aspartate = N-carbamoyl-L-aspartate + phosphate + H(+). The protein operates within pyrimidine metabolism; UMP biosynthesis via de novo pathway; (S)-dihydroorotate from bicarbonate: step 2/3. Catalyzes the condensation of carbamoyl phosphate and aspartate to form carbamoyl aspartate and inorganic phosphate, the committed step in the de novo pyrimidine nucleotide biosynthesis pathway. The sequence is that of Aspartate carbamoyltransferase catalytic subunit from Pelotomaculum thermopropionicum (strain DSM 13744 / JCM 10971 / SI).